The sequence spans 325 residues: Lipoyl synthase (325 aa).

The disordered stretch occupies residues 1-24; it reads MPIAPDRVRHPEKANRPDNPIQRK. [4Fe-4S] cluster-binding residues include Cys54, Cys59, Cys65, Cys80, Cys84, Cys87, and Ser293. Residues 66–282 form the Radical SAM core domain; sequence WKKKHATFMI…VTVGRGKGFL (217 aa).

It belongs to the radical SAM superfamily. Lipoyl synthase family. Requires [4Fe-4S] cluster as cofactor.

Its subcellular location is the cytoplasm. It carries out the reaction [[Fe-S] cluster scaffold protein carrying a second [4Fe-4S](2+) cluster] + N(6)-octanoyl-L-lysyl-[protein] + 2 oxidized [2Fe-2S]-[ferredoxin] + 2 S-adenosyl-L-methionine + 4 H(+) = [[Fe-S] cluster scaffold protein] + N(6)-[(R)-dihydrolipoyl]-L-lysyl-[protein] + 4 Fe(3+) + 2 hydrogen sulfide + 2 5'-deoxyadenosine + 2 L-methionine + 2 reduced [2Fe-2S]-[ferredoxin]. The protein operates within protein modification; protein lipoylation via endogenous pathway; protein N(6)-(lipoyl)lysine from octanoyl-[acyl-carrier-protein]: step 2/2. Its function is as follows. Catalyzes the radical-mediated insertion of two sulfur atoms into the C-6 and C-8 positions of the octanoyl moiety bound to the lipoyl domains of lipoate-dependent enzymes, thereby converting the octanoylated domains into lipoylated derivatives. The protein is Lipoyl synthase of Rhodospirillum centenum (strain ATCC 51521 / SW).